A 70-amino-acid polypeptide reads, in one-letter code: ATP synthase subunit c (70 aa).

2 helical membrane passes run 3-23 (ALAA…IGIA) and 44-64 (LFLI…VIAF).

It belongs to the ATPase C chain family. F-type ATPases have 2 components, F(1) - the catalytic core - and F(0) - the membrane proton channel. F(1) has five subunits: alpha(3), beta(3), gamma(1), delta(1), epsilon(1). F(0) has three main subunits: a(1), b(2) and c(10-14). The alpha and beta chains form an alternating ring which encloses part of the gamma chain. F(1) is attached to F(0) by a central stalk formed by the gamma and epsilon chains, while a peripheral stalk is formed by the delta and b chains.

The protein localises to the cell membrane. F(1)F(0) ATP synthase produces ATP from ADP in the presence of a proton or sodium gradient. F-type ATPases consist of two structural domains, F(1) containing the extramembraneous catalytic core and F(0) containing the membrane proton channel, linked together by a central stalk and a peripheral stalk. During catalysis, ATP synthesis in the catalytic domain of F(1) is coupled via a rotary mechanism of the central stalk subunits to proton translocation. In terms of biological role, key component of the F(0) channel; it plays a direct role in translocation across the membrane. A homomeric c-ring of between 10-14 subunits forms the central stalk rotor element with the F(1) delta and epsilon subunits. This Caldicellulosiruptor bescii (strain ATCC BAA-1888 / DSM 6725 / KCTC 15123 / Z-1320) (Anaerocellum thermophilum) protein is ATP synthase subunit c.